Reading from the N-terminus, the 198-residue chain is Fe/S biogenesis protein NfuA (198 aa).

Residues Cys-155 and Cys-158 each contribute to the [4Fe-4S] cluster site.

It belongs to the NfuA family. As to quaternary structure, homodimer. [4Fe-4S] cluster is required as a cofactor.

In terms of biological role, involved in iron-sulfur cluster biogenesis. Binds a 4Fe-4S cluster, can transfer this cluster to apoproteins, and thereby intervenes in the maturation of Fe/S proteins. Could also act as a scaffold/chaperone for damaged Fe/S proteins. This chain is Fe/S biogenesis protein NfuA, found in Haemophilus influenzae (strain 86-028NP).